Reading from the N-terminus, the 510-residue chain is Aspartate kinase FUB3 (510 aa).

ACT domains are found at residues 372–440 and 446–510; these read ILSN…VLPD and LVGA…KNAM.

This sequence belongs to the aspartokinase family.

The enzyme catalyses L-aspartate + ATP = 4-phospho-L-aspartate + ADP. The protein operates within mycotoxin biosynthesis. Its function is as follows. Aspartate kinase; part of the gene cluster that mediates the biosynthesis of fusaric acid, a mycotoxin with low to moderate toxicity to animals and humans, but with high phytotoxic properties. L-aspartate is suggested as fusaric acid amino acid precursor that is activated and further processed to O-acetyl-L-homoserine by cluster enzymes aspartate kinase FUB3 and homoserine O-acetyltransferase FUB5, as well as enzymes of the primary metabolism. The polyketide synthase (PKS) FUB1 generates the triketide trans-2-hexenal which is presumptively released by the hydrolase FUB4 and linked to the NRPS-bound amino acid precursor by NAD(P)-dependent dehydrogenase FUB6. FUB1, FUB4, and the non-canonical NRPS Fub8 may form an enzyme complex. Further processing of the NRPS-bound intermediate might be carried out by FUB6 and the sulfhydrylase FUB7, enabling a spontaneous electrocyclization to close the carbon backbone of fusaric acid. Dihydrofusaric acid is likely to be released via reduction by the thioester reductase (TR) domain of FUB8 whereupon the final oxidation to fusaric acid may (also) be performed by the FMN-dependent dehydrogenase FUB9. This is Aspartate kinase FUB3 from Gibberella moniliformis (strain M3125 / FGSC 7600) (Maize ear and stalk rot fungus).